A 170-amino-acid polypeptide reads, in one-letter code: CDP-archaeol synthase (170 aa).

Helical transmembrane passes span 9 to 29 (AFWY…LGGG), 53 to 73 (GFFG…FLLP), 79 to 99 (LGIA…GDLI), 114 to 134 (PAVG…AYPV), and 140 to 160 (GEVL…NIFA).

Belongs to the CDP-archaeol synthase family. Mg(2+) serves as cofactor.

It localises to the cell membrane. The enzyme catalyses 2,3-bis-O-(geranylgeranyl)-sn-glycerol 1-phosphate + CTP + H(+) = CDP-2,3-bis-O-(geranylgeranyl)-sn-glycerol + diphosphate. It participates in membrane lipid metabolism; glycerophospholipid metabolism. Functionally, catalyzes the formation of CDP-2,3-bis-(O-geranylgeranyl)-sn-glycerol (CDP-archaeol) from 2,3-bis-(O-geranylgeranyl)-sn-glycerol 1-phosphate (DGGGP) and CTP. This reaction is the third ether-bond-formation step in the biosynthesis of archaeal membrane lipids. The chain is CDP-archaeol synthase from Pyrococcus horikoshii (strain ATCC 700860 / DSM 12428 / JCM 9974 / NBRC 100139 / OT-3).